Consider the following 442-residue polypeptide: MRTIAIVGKPNVGKSSLFNRILMRRKSIVDDQPGVTRDRIYDIGNWLTRSFMLIDTGGIISSKDTYQDNINEQVLFAINEANTIIFLVSAKDGINNDDKKIAKMLKEKAKDKKIILVINKIESEKYYLNEGELYSFGFGKFFKISAEHGIGMGDLLDELVKDMPIQNNLEKQERFKFCIIGRPNVGKSSLTNTILGEQRVIVNAEAGSTRDSIDNDFNYYNKKYTIIDTAGIRRKGKIVESVEKYAVLRTKKAIERSQLILLVLDGSEPFKEQDEVVGGLAYNANIPTIIIVNKWDNIINKNSHTMEMVKKQIRSQFKYLSWAPIVFVSALDNKRIHTIFEAIEFVREQAMRKIATSLLNDVVIKANAFQEPPPFKGGRISISYIVQVQSQIPTFVLKCNNPKFLHFSYARYIENEIRKAFGFDSVPITLYWQDKNKKLRGE.

2 consecutive EngA-type G domains span residues 2–167 and 175–351; these read RTIA…PIQN and FKFC…EQAM. Residues 8–15, 55–59, 119–122, 181–188, 228–232, and 293–296 contribute to the GTP site; these read GKPNVGKS, DTGGI, NKIE, GRPNVGKS, DTAGI, and NKWD. Residues 352–436 form the KH-like domain; it reads RKIATSLLND…PITLYWQDKN (85 aa).

Belongs to the TRAFAC class TrmE-Era-EngA-EngB-Septin-like GTPase superfamily. EngA (Der) GTPase family. In terms of assembly, associates with the 50S ribosomal subunit.

In terms of biological role, GTPase that plays an essential role in the late steps of ribosome biogenesis. This chain is GTPase Der, found in Ureaplasma parvum serovar 3 (strain ATCC 27815 / 27 / NCTC 11736).